The sequence spans 110 residues: UPF0122 protein GWCH70_1086 (110 aa).

It belongs to the UPF0122 family.

In terms of biological role, might take part in the signal recognition particle (SRP) pathway. This is inferred from the conservation of its genetic proximity to ftsY/ffh. May be a regulatory protein. The sequence is that of UPF0122 protein GWCH70_1086 from Geobacillus sp. (strain WCH70).